A 118-amino-acid polypeptide reads, in one-letter code: Large ribosomal subunit protein uL18 (118 aa).

The tract at residues 1–24 (MISKPDKNKTRQRRHARVRGKISG) is disordered. A compositionally biased stretch (basic residues) spans 10-20 (TRQRRHARVRG).

The protein belongs to the universal ribosomal protein uL18 family. As to quaternary structure, part of the 50S ribosomal subunit; part of the 5S rRNA/L5/L18/L25 subcomplex. Contacts the 5S and 23S rRNAs.

This is one of the proteins that bind and probably mediate the attachment of the 5S RNA into the large ribosomal subunit, where it forms part of the central protuberance. In Lactiplantibacillus plantarum (strain ATCC BAA-793 / NCIMB 8826 / WCFS1) (Lactobacillus plantarum), this protein is Large ribosomal subunit protein uL18.